The primary structure comprises 104 residues: NADH-quinone oxidoreductase subunit K (104 aa).

3 helical membrane-spanning segments follow: residues 4–24 (VAYY…AFLI), 28–48 (IITI…SFVA), and 64–84 (IFVF…LAII).

Belongs to the complex I subunit 4L family. As to quaternary structure, NDH-1 is composed of 14 different subunits. Subunits NuoA, H, J, K, L, M, N constitute the membrane sector of the complex.

It localises to the cell inner membrane. The enzyme catalyses a quinone + NADH + 5 H(+)(in) = a quinol + NAD(+) + 4 H(+)(out). Its function is as follows. NDH-1 shuttles electrons from NADH, via FMN and iron-sulfur (Fe-S) centers, to quinones in the respiratory chain. The immediate electron acceptor for the enzyme in this species is believed to be ubiquinone. Couples the redox reaction to proton translocation (for every two electrons transferred, four hydrogen ions are translocated across the cytoplasmic membrane), and thus conserves the redox energy in a proton gradient. This is NADH-quinone oxidoreductase subunit K from Acidobacterium capsulatum (strain ATCC 51196 / DSM 11244 / BCRC 80197 / JCM 7670 / NBRC 15755 / NCIMB 13165 / 161).